The primary structure comprises 321 residues: Ferrochelatase (321 aa).

Fe cation is bound by residues H194 and E275.

The protein belongs to the ferrochelatase family.

It is found in the cytoplasm. The catalysed reaction is heme b + 2 H(+) = protoporphyrin IX + Fe(2+). It functions in the pathway porphyrin-containing compound metabolism; protoheme biosynthesis; protoheme from protoporphyrin-IX: step 1/1. Catalyzes the ferrous insertion into protoporphyrin IX. The sequence is that of Ferrochelatase from Wigglesworthia glossinidia brevipalpis.